A 143-amino-acid polypeptide reads, in one-letter code: Large ribosomal subunit protein uL15 (143 aa).

2 stretches are compositionally biased toward basic residues: residues 1–13 and 23–38; these read MIRK…KMRG and KKHR…GNAG. Residues 1-38 are disordered; the sequence is MIRKSKKITKMRGSRTCGYGEAKKHRGAGHRGGRGNAG.

It belongs to the universal ribosomal protein uL15 family. In terms of assembly, part of the 50S ribosomal subunit.

Its function is as follows. Binds to the 23S rRNA. The protein is Large ribosomal subunit protein uL15 of Methanococcus maripaludis (strain C7 / ATCC BAA-1331).